The sequence spans 1342 residues: DNA-directed RNA polymerase subunit beta (1342 aa).

Residues Lys-1022 and Lys-1200 each carry the N6-acetyllysine modification.

It belongs to the RNA polymerase beta chain family. As to quaternary structure, the RNAP catalytic core consists of 2 alpha, 1 beta, 1 beta' and 1 omega subunit. When a sigma factor is associated with the core the holoenzyme is formed, which can initiate transcription.

The enzyme catalyses RNA(n) + a ribonucleoside 5'-triphosphate = RNA(n+1) + diphosphate. DNA-dependent RNA polymerase catalyzes the transcription of DNA into RNA using the four ribonucleoside triphosphates as substrates. The chain is DNA-directed RNA polymerase subunit beta from Escherichia coli O81 (strain ED1a).